Consider the following 354-residue polypeptide: Uroporphyrinogen decarboxylase (354 aa).

Residues 27-31 (RQAGR), Asp77, Tyr154, Thr209, and His327 each bind substrate.

This sequence belongs to the uroporphyrinogen decarboxylase family. Homodimer.

Its subcellular location is the cytoplasm. It carries out the reaction uroporphyrinogen III + 4 H(+) = coproporphyrinogen III + 4 CO2. The protein operates within porphyrin-containing compound metabolism; protoporphyrin-IX biosynthesis; coproporphyrinogen-III from 5-aminolevulinate: step 4/4. Catalyzes the decarboxylation of four acetate groups of uroporphyrinogen-III to yield coproporphyrinogen-III. This is Uroporphyrinogen decarboxylase from Salmonella paratyphi B (strain ATCC BAA-1250 / SPB7).